The chain runs to 282 residues: Putative phosphoenolpyruvate synthase regulatory protein (282 aa).

162–169 (GVSRSGKT) contributes to the ADP binding site.

The protein belongs to the pyruvate, phosphate/water dikinase regulatory protein family. PSRP subfamily.

The enzyme catalyses [pyruvate, water dikinase] + ADP = [pyruvate, water dikinase]-phosphate + AMP + H(+). It catalyses the reaction [pyruvate, water dikinase]-phosphate + phosphate + H(+) = [pyruvate, water dikinase] + diphosphate. Its function is as follows. Bifunctional serine/threonine kinase and phosphorylase involved in the regulation of the phosphoenolpyruvate synthase (PEPS) by catalyzing its phosphorylation/dephosphorylation. In Psychrobacter arcticus (strain DSM 17307 / VKM B-2377 / 273-4), this protein is Putative phosphoenolpyruvate synthase regulatory protein.